The chain runs to 189 residues: uncharacterized protein (189 aa).

The span at 1 to 15 (MDKHGVKTPLWRKEV) shows a compositional bias: basic and acidic residues. Residues 1 to 77 (MDKHGVKTPL…SPLRQESSSQ (77 aa)) form a disordered region. 2 stretches are compositionally biased toward acidic residues: residues 16–29 (EDPE…EDDS) and 46–56 (SATETEEDSRD). A compositionally biased stretch (polar residues) spans 65 to 77 (VSYSPLRQESSSQ).

This is an uncharacterized protein from Mus musculus (Mouse).